A 131-amino-acid polypeptide reads, in one-letter code: Phosphomevalonate dehydratase small subunit (131 aa).

The Proton acceptor role is filled by serine 62.

The protein belongs to the AcnX type II small subunit family. Heterodimer composed of a large subunit (PMDh-L) and a small subunit (PMDh-S).

It catalyses the reaction (R)-5-phosphomevalonate = (2E)-3-methyl-5-phosphooxypent-2-enoate + H2O. Its pathway is isoprenoid biosynthesis; isopentenyl diphosphate biosynthesis via mevalonate pathway. In terms of biological role, component of a hydro-lyase that catalyzes the dehydration of mevalonate 5-phosphate (MVA5P) to form trans-anhydromevalonate 5-phosphate (tAHMP). Involved in the archaeal mevalonate (MVA) pathway, which provides fundamental precursors for isoprenoid biosynthesis, such as isopentenyl diphosphate (IPP) and dimethylallyl diphosphate (DMAPP). In Methanothermobacter thermautotrophicus (strain ATCC 29096 / DSM 1053 / JCM 10044 / NBRC 100330 / Delta H) (Methanobacterium thermoautotrophicum), this protein is Phosphomevalonate dehydratase small subunit.